A 68-amino-acid polypeptide reads, in one-letter code: Beta-defensin 1 (68 aa).

Residues 1-21 (MRTSYLLLFTLCLLLSEIASG) form the signal peptide. Positions 22–32 (GNFLTGLGHRS) are excised as a propeptide. 3 cysteine pairs are disulfide-bonded: Cys-37-Cys-66, Cys-44-Cys-59, and Cys-49-Cys-67.

It belongs to the beta-defensin family. Monomer. Homodimer.

The protein resides in the secreted. Its subcellular location is the membrane. Has bactericidal activity. May act as a ligand for C-C chemokine receptor CCR6. Positively regulates the sperm motility and bactericidal activity in a CCR6-dependent manner. Binds to CCR6 and triggers Ca2+ mobilization in the sperm which is important for its motility. This Gorilla gorilla gorilla (Western lowland gorilla) protein is Beta-defensin 1 (DEFB1).